Consider the following 788-residue polypeptide: Patatin-like phospholipase domain-containing protein DEHA2B04136g (788 aa).

Residues 136 to 156 (WPILIFISCWISLLCFMYIIV) form a helical membrane-spanning segment. The PNPLA domain maps to 311–503 (LCLSGGACFT…RTDIPIDALN (193 aa)). A GXSXG motif is present at residues 342-346 (GTSGG). S344 serves as the catalytic Nucleophile. The active-site Proton acceptor is D490. Residues 662-672 (ANFNTLTSSDS) show a composition bias toward polar residues. Residues 662–771 (ANFNTLTSSD…DTGSRFLKSF (110 aa)) form a disordered region. 2 stretches are compositionally biased toward acidic residues: residues 690–705 (MFDDDEYDSDSSDDEV) and 723–749 (EDGDDDEDAYEYYDDDDYGLSTEDEAN).

This sequence belongs to the PLPL family.

Its subcellular location is the membrane. Functionally, probable lipid hydrolase. In Debaryomyces hansenii (strain ATCC 36239 / CBS 767 / BCRC 21394 / JCM 1990 / NBRC 0083 / IGC 2968) (Yeast), this protein is Patatin-like phospholipase domain-containing protein DEHA2B04136g.